The following is a 137-amino-acid chain: Hemoglobin subunit beta (137 aa).

The region spanning 3-137 (HWTQEERDEI…VIDAISKQYH (135 aa)) is the Globin domain. Positions 54 and 83 each coordinate heme b.

This sequence belongs to the globin family. Heterotetramer of two alpha chains and two beta chains. As to expression, red blood cells.

In terms of biological role, involved in oxygen transport from gills to the various peripheral tissues. In Mustelus griseus (Spotless smooth-hound), this protein is Hemoglobin subunit beta (HBB).